A 191-amino-acid polypeptide reads, in one-letter code: Adenylate kinase (191 aa).

12-17 is an ATP binding site; sequence GSGKTT. Residues 33 to 62 are NMP; that stretch reads STGDLLRAEVASGSELGKLIDSFISKGNLV. Residues threonine 34, arginine 39, 60–62, 87–90, and glutamine 94 contribute to the AMP site; these read NLV and GYPR. Residues 129 to 135 form an LID region; it reads GRARGAD. An ATP-binding site is contributed by arginine 130. Residues arginine 132 and arginine 144 each coordinate AMP. Residue arginine 172 coordinates ATP.

Belongs to the adenylate kinase family. As to quaternary structure, monomer.

It is found in the cytoplasm. The enzyme catalyses AMP + ATP = 2 ADP. The protein operates within purine metabolism; AMP biosynthesis via salvage pathway; AMP from ADP: step 1/1. Its function is as follows. Catalyzes the reversible transfer of the terminal phosphate group between ATP and AMP. Plays an important role in cellular energy homeostasis and in adenine nucleotide metabolism. The protein is Adenylate kinase of Campylobacter fetus subsp. fetus (strain 82-40).